We begin with the raw amino-acid sequence, 101 residues long: Citrate lyase acyl carrier protein (101 aa).

Serine 14 bears the O-(phosphoribosyl dephospho-coenzyme A)serine mark.

Belongs to the CitD family. As to quaternary structure, oligomer with a subunit composition of (alpha,beta,gamma)6.

The protein resides in the cytoplasm. Covalent carrier of the coenzyme of citrate lyase. This chain is Citrate lyase acyl carrier protein, found in Lacticaseibacillus casei (strain BL23) (Lactobacillus casei).